The chain runs to 278 residues: Large ribosomal subunit protein uL2 (278 aa).

Disordered stretches follow at residues 27 to 57 and 224 to 278; these read STPE…QGGG and VAMN…NKKR. Residues 258–278 show a composition bias toward basic residues; the sequence is RSPKKASSKYIVRRRKTNKKR.

Belongs to the universal ribosomal protein uL2 family. Part of the 50S ribosomal subunit. Forms a bridge to the 30S subunit in the 70S ribosome.

One of the primary rRNA binding proteins. Required for association of the 30S and 50S subunits to form the 70S ribosome, for tRNA binding and peptide bond formation. It has been suggested to have peptidyltransferase activity; this is somewhat controversial. Makes several contacts with the 16S rRNA in the 70S ribosome. The polypeptide is Large ribosomal subunit protein uL2 (Streptomyces avermitilis (strain ATCC 31267 / DSM 46492 / JCM 5070 / NBRC 14893 / NCIMB 12804 / NRRL 8165 / MA-4680)).